A 966-amino-acid chain; its full sequence is Polycystin-2 (966 aa).

The interval 1-106 is disordered; the sequence is MVNSRRVQPQ…DDDEVEGEEG (106 aa). The Cytoplasmic portion of the chain corresponds to 1-217; that stretch reads MVNSRRVQPQ…NANREKYLKS (217 aa). Over residues 30-44 the composition is skewed to gly residues; the sequence is VAGGAGLAVPGGLGE. Basic and acidic residues predominate over residues 46-56; sequence RGLEIEMERIR. Residues 58-79 show a composition bias toward low complexity; it reads AAARDPPAGASASPSPPLSSCS. 2 positions are modified to phosphoserine: Ser72 and Ser76. The span at 91–105 shows a compositional bias: acidic residues; it reads EAEEDDDDDEVEGEE. Arg135 is subject to Omega-N-methylarginine. The disordered stretch occupies residues 147 to 179; the sequence is HLSGRRRRLEDQGAQCPSPAGGGDPLHRHLPLE. A helical membrane pass occupies residues 218–239; the sequence is VLRELVTYLFFLVVLCILTYGM. Over 240 to 466 the chain is Extracellular; that stretch reads MSSNVYYYTR…PVKLIRYVTA (227 aa). N-linked (GlcNAc...) asparagine glycans are attached at residues Asn297, Asn303, and Asn326. An intrachain disulfide couples Cys329 to Cys342. Residues Asn360 and Asn373 are each glycosylated (N-linked (GlcNAc...) asparagine). Residues 467 to 487 traverse the membrane as a helical segment; that stretch reads FDFFLAACEIIFCFFIIYYVV. At 488–503 the chain is on the cytoplasmic side; sequence EEILEIRIHRLSYFRS. The helical transmembrane segment at 504-524 threads the bilayer; sequence FWNCLDVVIVVLSVVAMVINI. Residues 525-550 lie on the Extracellular side of the membrane; the sequence is YRMSNAEGLLQFLEDQNSFPNFEHVA. Residues 551 to 571 form a helical membrane-spanning segment; sequence YWQIQFNNISAVMVFLVWIKL. Gln555 contacts cholesterol. Residues 572 to 595 are Cytoplasmic-facing; the sequence is FKFINFNRTMSQLSTTMSRCAKDL. Residues 596–617 form a helical membrane-spanning segment; the sequence is FGFTIMFSIIFLAYAQLAYLVF. The Extracellular portion of the chain corresponds to 618 to 629; it reads GTQVDDFSTFQE. An intramembrane region (pore-forming) is located at residues 630-644; it reads CIFTQFRIILGDINF. Leu639 provides a ligand contact to Ca(2+). The Selectivity filter signature appears at 639-641; the sequence is LGD. The Extracellular portion of the chain corresponds to 645–652; the sequence is AEIEEANR. A helical membrane pass occupies residues 653 to 673; the sequence is VLGPLYFTTFVFFMFFILLNM. The Cytoplasmic segment spans residues 674–966; that stretch reads FLAIINDSYS…GGNGSANVHA (293 aa). The EF-hand domain occupies 748–783; that stretch reads HTDAEIEAIFTKYDQDGDQELTEREHQQMRDDLEKE. Residues Asp761, Asp763, Asp765, Glu767, and Glu772 each coordinate Ca(2+). The disordered stretch occupies residues 764–828; it reads GDQELTEREH…GHSSRRRGSI (65 aa). Positions 768-793 are enriched in basic and acidic residues; the sequence is LTEREHQQMRDDLEKEREDLDLEHSS. Residues 794 to 805 show a composition bias toward low complexity; it reads LPRPMSSRSFPR. Phosphoserine is present on residues Ser799, Ser806, Ser810, and Ser827. The tract at residues 801–820 is linker; sequence RSFPRSLDDSEEEDDEDSGH. The important for interaction with PACS1 and PACS2 stretch occupies residues 808-819; that stretch reads DDSEEEDDEDSG. Residues 831 to 870 adopt a coiled-coil conformation; sequence GVSYEEFQVLVRRVDRMEHSIGSIVSKIDAVIVKLEIMER. The segment at 914-966 is disordered; the sequence is WESDDAASQTGHGVSTQVGLGGQPHPRNPRPPSSQSAEGLEGGGGNGSANVHA. The span at 919 to 931 shows a compositional bias: polar residues; it reads AASQTGHGVSTQV.

This sequence belongs to the polycystin family. As to quaternary structure, homotetramer. Component of the heterotetrameric polycystin channel complex with PKD1; the tetramer contains one PKD1 chain and three PKD2 chains. Interaction with PKD1 is required for ciliary localization. Isoform 1 interacts with PKD1 while isoform 3 does not. Interacts with PKD1L1. Interacts with CD2AP. Interacts with HAX1. Interacts with NEK8. Part of a complex containing AKAP5, ADCY5, ADCY6 and PDE4C. Interacts (via C-terminus) with TRPV4 (via C-terminus). Interacts (via C-terminal acidic region) with PACS1 and PACS2; these interactions retain the protein in the endoplasmic reticulum and prevent trafficking to the cell membrane. Interacts with TMEM33; enhancing its opening at the ER membrane. Interacts with TMEM120A; TMEM120A inhibits PKD2 channel activity through the physical association of PKD2 with TMEM120A. Interacts (via N-terminus) with RYR2; regulates RYR2 channel activity. N-glycosylated. The four subunits in a tetramer probably differ in the extent of glycosylation; simultaneous glycosylation of all experimentally validated sites would probably create steric hindrance. In terms of processing, sumoylated by SUMO1; sumoylation regulates PKD2 membrane recycling and is necessary for intravascular pressure-induced arterial contractility. Post-translationally, phosphorylated. Phosphorylation is important for protein function; a mutant that lacks the N-terminal phosphorylation sites cannot complement a zebrafish pkd2-deficient mutant. PKD-mediated phosphorylation at the C-terminus regulates its function in the release of Ca(2+) stores from the endoplasmic reticulum. Phosphorylation at Ser-810 regulates PKD2 trafficking. Phosphorylation at Ser-72 is required for PKD2 trafficking to or retention at the lateral plasma membrane. Phosphorylation at Ser-799, Ser-810 and Ser-827 regulates PKD2 channel activity. Detected in kidney epithelium (at protein level). Highly expressed on basolateral membranes in distal convoluted tubules and medullary thick ascending limbs of Henle. Detected at much lower levels in cortical and medullary collecting tubules, and not detected in the glomerular tuft, in thin limbs of Henle, interstitium and blood vessels (at protein level). Expressed in mesenchymally derived structures in the developing embryo at day 12.5. Isoform 1 is predominantly expressed in kidney at all developmental stages with high levels also detected in lung. Isoform 3 shows highest expression in brain with lower expression in kidney and lung, low levels in thymus and is hardly detectable in liver.

The protein resides in the cell projection. The protein localises to the cilium membrane. It localises to the cell membrane. Its subcellular location is the basolateral cell membrane. It is found in the cytoplasmic vesicle membrane. The protein resides in the endoplasmic reticulum membrane. The protein localises to the golgi apparatus. It localises to the vesicle. Its subcellular location is the secreted. It is found in the extracellular exosome. It catalyses the reaction K(+)(in) = K(+)(out). The catalysed reaction is Na(+)(in) = Na(+)(out). It carries out the reaction Ca(2+)(in) = Ca(2+)(out). With respect to regulation, channel activity is regulated by phosphorylation. The channel is activated by increased cytoplasmic Ca(2+) (in the uM range) and by membrane depolarization. TMEM120A inhibits the channel activity of PKD2, and mediates mechanosensitivity of the PKD2-TMEM120A channel complex. At the endoplasmic reticulum membrane (ER), TMEM33 enhances its channel activity. PKD1/ PKD2 complex on the plasma membrane is activated by PKD1 N-terminus. Its function is as follows. Forms a nonselective cation channel. Can function as a homotetrameric ion channel or can form heteromer with PKD1. Displays distinct function depending on its subcellular localization and regulation by its binding partners. Functions as a cation channel, with a preference for monovalent cations over divalent cations that allows K(+), Na(+) and Ca(2+) influx, with low selectivity for Ca(2+). Involved in fluid-flow mechanosensation by the primary cilium in renal epithelium. In the endoplasmic reticulum, likely functions as a K(+) channel to facilitate Ca(2+) release. The heterotetrameric PKD1/PKD2 channel has higher Ca(2+) permeability than homomeric PKD2 channel and acts as a primarily Ca(2+)-permeable channel. PKD1 and PKD2 may function through a common signaling pathway that is necessary to maintain the normal, differentiated state of renal tubule cells. Interacts with and acts as a regulator of a number of other channels, such as TRPV4, TRPC1, IP3R, RYR2, ultimately further affecting intracellular signaling, to modulate intracellular Ca(2+) signaling. Together with TRPV4, forms mechano- and thermosensitive channels in cilium. In cardiomyocytes, PKD2 modulates Ca(2+) release from stimulated RYR2 receptors through direct association. Also involved in left-right axis specification via its role in sensing nodal flow; forms a complex with PKD1L1 in cilia to facilitate flow detection in left-right patterning. Acts as a regulator of cilium length together with PKD1. Mediates systemic blood pressure and contributes to the myogenic response in cerebral arteries though vasoconstriction. The chain is Polycystin-2 from Mus musculus (Mouse).